A 489-amino-acid polypeptide reads, in one-letter code: IPT/TIG domain-containing protein BACOVA_02650 (489 aa).

The signal sequence occupies residues 1 to 27; the sequence is MKSIYKYLDTRLFLIGLLVLPFLAVVS. Cys28 carries N-palmitoyl cysteine lipidation. Cys28 is lipidated: S-diacylglycerol cysteine. 3 IPT/TIG domains span residues 57 to 103, 136 to 204, and 232 to 304; these read VNPG…PNEL, PYIT…TAPA, and PVVT…AIGG.

The protein resides in the cell outer membrane. The protein operates within glucan metabolism; xyloglucan degradation. In terms of biological role, polysaccharide-binding protein present at the surface of the cell. Probably mediates xyloglucan-binding before xyloglucan transport in the periplasm for degradation. This is IPT/TIG domain-containing protein BACOVA_02650 from Bacteroides ovatus (strain ATCC 8483 / DSM 1896 / JCM 5824 / BCRC 10623 / CCUG 4943 / NCTC 11153).